The chain runs to 55 residues: MKFVKAIWPFVAVAIVFMFMSAFKFNDQLTDQEKQKIDMEMNKIQQQEEPVNANK.

Positions 1 to 25 are cleaved as a signal peptide; the sequence is MKFVKAIWPFVAVAIVFMFMSAFKF.

This is an uncharacterized protein from Bacillus subtilis (strain 168).